A 418-amino-acid polypeptide reads, in one-letter code: Argininosuccinate synthase (418 aa).

Residues 14–22 (AYSGGLDTS) and Ala-42 contribute to the ATP site. Residues Tyr-94 and Ser-99 each contribute to the L-citrulline site. Gly-124 contacts ATP. Positions 126, 130, and 131 each coordinate L-aspartate. Asn-130 contacts L-citrulline. 5 residues coordinate L-citrulline: Arg-134, Ser-183, Ser-192, Glu-273, and Tyr-285.

Belongs to the argininosuccinate synthase family. Type 1 subfamily. In terms of assembly, homotetramer.

It localises to the cytoplasm. The catalysed reaction is L-citrulline + L-aspartate + ATP = 2-(N(omega)-L-arginino)succinate + AMP + diphosphate + H(+). The protein operates within amino-acid biosynthesis; L-arginine biosynthesis; L-arginine from L-ornithine and carbamoyl phosphate: step 2/3. This Colwellia psychrerythraea (strain 34H / ATCC BAA-681) (Vibrio psychroerythus) protein is Argininosuccinate synthase.